Reading from the N-terminus, the 620-residue chain is uncharacterized protein (620 aa).

Low complexity-rich tracts occupy residues 278–290 and 301–319; these read RPPS…AGEP and ASTA…TRPT. Residues 278-620 form a disordered region; that stretch reads RPPSGSGEAA…KSQPPAAHTA (343 aa). Over residues 336–411 the composition is skewed to basic and acidic residues; sequence ARPESEEQTD…QESQVARRDE (76 aa). Composition is skewed to pro residues over residues 446–470 and 481–500; these read VPGP…PPMT and RCPP…PPRP. 2 stretches are compositionally biased toward low complexity: residues 501–512 and 522–541; these read SSDTPLSAVSRP and TARV…YSPA. The segment covering 542-551 has biased composition (pro residues); it reads PLSPPSPVSP. Residues 597-607 show a composition bias toward low complexity; the sequence is SVPSSASPSAS.

This sequence belongs to the herpesviridae US22 family.

This is an uncharacterized protein from Homo sapiens (Human).